A 570-amino-acid chain; its full sequence is Proline--tRNA ligase (570 aa).

It belongs to the class-II aminoacyl-tRNA synthetase family. ProS type 1 subfamily. Homodimer.

It is found in the cytoplasm. The enzyme catalyses tRNA(Pro) + L-proline + ATP = L-prolyl-tRNA(Pro) + AMP + diphosphate. Its function is as follows. Catalyzes the attachment of proline to tRNA(Pro) in a two-step reaction: proline is first activated by ATP to form Pro-AMP and then transferred to the acceptor end of tRNA(Pro). As ProRS can inadvertently accommodate and process non-cognate amino acids such as alanine and cysteine, to avoid such errors it has two additional distinct editing activities against alanine. One activity is designated as 'pretransfer' editing and involves the tRNA(Pro)-independent hydrolysis of activated Ala-AMP. The other activity is designated 'posttransfer' editing and involves deacylation of mischarged Ala-tRNA(Pro). The misacylated Cys-tRNA(Pro) is not edited by ProRS. In Neisseria meningitidis serogroup A / serotype 4A (strain DSM 15465 / Z2491), this protein is Proline--tRNA ligase.